Consider the following 222-residue polypeptide: PKHD-type hydroxylase cce_3668 (222 aa).

One can recognise a Fe2OG dioxygenase domain in the interval 78-175 (HIHSLRFSRY…RLVVVGWVHS (98 aa)). 3 residues coordinate Fe cation: histidine 96, aspartate 98, and histidine 156. 2-oxoglutarate is bound at residue arginine 166.

The cofactor is Fe(2+). It depends on L-ascorbate as a cofactor.

The sequence is that of PKHD-type hydroxylase cce_3668 from Crocosphaera subtropica (strain ATCC 51142 / BH68) (Cyanothece sp. (strain ATCC 51142)).